Reading from the N-terminus, the 298-residue chain is 1D-myo-inositol 2-acetamido-2-deoxy-alpha-D-glucopyranoside deacetylase (298 aa).

Residues histidine 14, aspartate 17, and histidine 148 each contribute to the Zn(2+) site. A disordered region spans residues 277-298; sequence RGPAGPDGREHDLFAGLDGPAT.

The protein belongs to the MshB deacetylase family. Zn(2+) serves as cofactor.

The enzyme catalyses 1D-myo-inositol 2-acetamido-2-deoxy-alpha-D-glucopyranoside + H2O = 1D-myo-inositol 2-amino-2-deoxy-alpha-D-glucopyranoside + acetate. Functionally, catalyzes the deacetylation of 1D-myo-inositol 2-acetamido-2-deoxy-alpha-D-glucopyranoside (GlcNAc-Ins) in the mycothiol biosynthesis pathway. The protein is 1D-myo-inositol 2-acetamido-2-deoxy-alpha-D-glucopyranoside deacetylase of Nocardia farcinica (strain IFM 10152).